The primary structure comprises 114 residues: Biofilm growth-associated repressor (114 aa).

An HTH arsR-type domain is found at 17 to 111 (DMEKRANEVA…ALYTIFCAQE (95 aa)). Positions 51–74 (VGELEQQIGIGQPTLSQQLGVLRE) form a DNA-binding region, H-T-H motif.

In terms of biological role, represses an operon that comprises itself, XF_0764, XF_0765, XF_0766 and blh. Binds to a palindromic AT-rich sequence spanning the -10 region of the blh promoter and blocks transcription of the operon. This Xylella fastidiosa (strain 9a5c) protein is Biofilm growth-associated repressor (bigR).